A 662-amino-acid polypeptide reads, in one-letter code: Acetyl-coenzyme A synthetase (662 aa).

CoA-binding positions include 197-200 and T317; that span reads RKGK. Residues 393–395, 417–422, D510, and R525 each bind ATP; these read GEP and DTWWQT. S533 is a CoA binding site. Position 536 (R536) interacts with ATP. The Mg(2+) site is built by H549 and V552. K623 bears the N6-acetyllysine mark.

This sequence belongs to the ATP-dependent AMP-binding enzyme family. Mg(2+) serves as cofactor. In terms of processing, acetylated. Deacetylation by the SIR2-homolog deacetylase activates the enzyme.

It carries out the reaction acetate + ATP + CoA = acetyl-CoA + AMP + diphosphate. Functionally, catalyzes the conversion of acetate into acetyl-CoA (AcCoA), an essential intermediate at the junction of anabolic and catabolic pathways. AcsA undergoes a two-step reaction. In the first half reaction, AcsA combines acetate with ATP to form acetyl-adenylate (AcAMP) intermediate. In the second half reaction, it can then transfer the acetyl group from AcAMP to the sulfhydryl group of CoA, forming the product AcCoA. The polypeptide is Acetyl-coenzyme A synthetase (Helicobacter pylori (strain HPAG1)).